The primary structure comprises 258 residues: Acetylglutamate kinase (258 aa).

Residues 40–41, R62, and N158 contribute to the substrate site; that span reads GG.

Belongs to the acetylglutamate kinase family. ArgB subfamily.

Its subcellular location is the cytoplasm. It catalyses the reaction N-acetyl-L-glutamate + ATP = N-acetyl-L-glutamyl 5-phosphate + ADP. Its pathway is amino-acid biosynthesis; L-arginine biosynthesis; N(2)-acetyl-L-ornithine from L-glutamate: step 2/4. In terms of biological role, catalyzes the ATP-dependent phosphorylation of N-acetyl-L-glutamate. This is Acetylglutamate kinase from Azobacteroides pseudotrichonymphae genomovar. CFP2.